Reading from the N-terminus, the 293-residue chain is ATP synthase gamma chain (293 aa).

Belongs to the ATPase gamma chain family. In terms of assembly, F-type ATPases have 2 components, CF(1) - the catalytic core - and CF(0) - the membrane proton channel. CF(1) has five subunits: alpha(3), beta(3), gamma(1), delta(1), epsilon(1). CF(0) has three main subunits: a, b and c.

It localises to the cell inner membrane. Functionally, produces ATP from ADP in the presence of a proton gradient across the membrane. The gamma chain is believed to be important in regulating ATPase activity and the flow of protons through the CF(0) complex. In Psychrobacter arcticus (strain DSM 17307 / VKM B-2377 / 273-4), this protein is ATP synthase gamma chain.